The following is a 301-amino-acid chain: DSC E3 ubiquitin ligase complex subunit B (301 aa).

The next 3 membrane-spanning stretches (helical) occupy residues 9 to 29 (APITKLLLIYTIASSIALSIL), 52 to 72 (LATWQLAGFTNSTEALFAAML), and 90 to 110 (TFIISTLPYTSLLPPLLLVLL). Residues 268–284 (AAAAASGNAGSASEASG) show a composition bias toward low complexity. Residues 268–301 (AAAAASGNAGSASEASGQRQRRREGGIMDRLRAL) are disordered. The span at 290–301 (REGGIMDRLRAL) shows a compositional bias: basic and acidic residues.

In terms of assembly, component of the DSC E3 ubiquitin ligase complex composed of dscA, dscB, dscC and dscD.

The protein resides in the endoplasmic reticulum membrane. It carries out the reaction S-ubiquitinyl-[E2 ubiquitin-conjugating enzyme]-L-cysteine + [acceptor protein]-L-lysine = [E2 ubiquitin-conjugating enzyme]-L-cysteine + N(6)-ubiquitinyl-[acceptor protein]-L-lysine.. The protein operates within protein modification; protein ubiquitination. Functionally, component of the DSC E3 ubiquitin ligase complex which is required for the srbA transcriptional activator proteolytic cleavage to release the soluble transcription factor from the membrane in low oxygen or sterol conditions. Required for growth during hypoxia and triazole drug susceptibility, as well as for virulence in a murine model of invasive pulmonary aspergillosis (IPA). The sequence is that of DSC E3 ubiquitin ligase complex subunit B from Aspergillus fumigatus (strain ATCC MYA-4609 / CBS 101355 / FGSC A1100 / Af293) (Neosartorya fumigata).